Here is a 1167-residue protein sequence, read N- to C-terminus: Integrin alpha-E (1167 aa).

Positions 1 to 19 are cleaved as a signal peptide; that stretch reads MKWLFHTLLCMASLKPQGA. Over 20–1114 the chain is Extracellular; it reads FNLDVDWAWV…IFLKEEETRS (1095 aa). FG-GAP repeat units lie at residues 27–81 and 84–142; these read AWVT…PDEI and QPVE…LQAQ. A glycan (N-linked (GlcNAc...) asparagine) is linked at Asn-51. Cystine bridges form between Cys-72–Cys-83 and Cys-130–Cys-164. Positions 149–192 are X-domain (extra domain); that stretch reads EGFLDPGAHVDSGDYCRSKGGSTGEEKKSARRRRTVEEEDEEED. The interval 163 to 191 is disordered; that stretch reads YCRSKGGSTGEEKKSARRRRTVEEEDEEE. The VWFA domain occupies 193–382; that stretch reads GTEIAIVLDG…SKLQQHIVHM (190 aa). Residues Asn-256, Asn-314, Asn-341, Asn-364, Asn-418, and Asn-437 are each glycosylated (N-linked (GlcNAc...) asparagine). Residues 383 to 435 form an FG-GAP 3 repeat; sequence EGTVGDALQYQLAQTGFSAQILDKGQVLLGTVGAFNWSGGALLYSTQNGRGCF. FG-GAP repeat units lie at residues 438–491, 492–552, 555–619, and 623–683; these read QTAK…REED, AFVR…DASF, AHTL…GLYD, and QQIR…FTPD. 12 residues coordinate Ca(2+): Asp-514, Asp-516, Asp-518, Asp-522, Asp-578, Asn-580, Asp-582, Asp-586, Asp-646, Asn-648, Asp-650, and Asp-654. Cys-698 and Cys-754 are joined by a disulfide. Asn-718 and Asn-773 each carry an N-linked (GlcNAc...) asparagine glycan. A disulfide bridge links Cys-814 with Cys-820. Asn-829 and Asn-846 each carry an N-linked (GlcNAc...) asparagine glycan. The cysteines at positions 884 and 898 are disulfide-linked. N-linked (GlcNAc...) asparagine glycosylation is found at Asn-911, Asn-925, Asn-968, and Asn-1013. 2 disulfide bridges follow: Cys-998/Cys-1023 and Cys-1031/Cys-1047. Asn-1055 and Asn-1086 each carry an N-linked (GlcNAc...) asparagine glycan. A helical membrane pass occupies residues 1115-1137; that stretch reads LPLIIGSSIGGLLVLVVIIAILF. Residues 1138–1167 are Cytoplasmic-facing; it reads KCGFFKRKYQQLNLESTRRAQLKADSLLQD. Residues 1140 to 1144 carry the GFFKR motif motif; the sequence is GFFKR.

It belongs to the integrin alpha chain family. Heterodimer of an alpha and a beta subunit. The alpha subunit is composed of a heavy and a light chains linked by a disulfide bond. Alpha-E associates with beta-7.

Its subcellular location is the membrane. Functionally, integrin alpha-E/beta-7 is a receptor for E-cadherin. It mediates adhesion of intra-epithelial T-lymphocytes to epithelial cell monolayers. Mice expressing a null mutation of the alpha-E subunit gene exhibit a marked reduction in the numbers of intraepithelial lymphocytes in the gut and in the development of gut-associated lymphoid aggregates, supporting a specific role for this integrin in mediating retention of lymphocytes in the intestinal wall. This chain is Integrin alpha-E (Itgae), found in Mus musculus (Mouse).